We begin with the raw amino-acid sequence, 371 residues long: Chaperone protein DnaJ (371 aa).

Residues 5 to 69 enclose the J domain; that stretch reads DYYEVLGLSK…QKRAQYDQFG (65 aa). The CR-type zinc-finger motif lies at 133 to 215; that stretch reads GKELNVEIPV…CHGSSKVRKR (83 aa). Zn(2+) is bound by residues C146, C149, C163, C166, C189, C192, C203, and C206. CXXCXGXG motif repeat units follow at residues 146-153, 163-170, 189-196, and 203-210; these read CDTCKGSG, CKHCSGSG, CGHCSGTG, and CTTCHGSS.

Belongs to the DnaJ family. As to quaternary structure, homodimer. The cofactor is Zn(2+).

Its subcellular location is the cytoplasm. Its function is as follows. Participates actively in the response to hyperosmotic and heat shock by preventing the aggregation of stress-denatured proteins and by disaggregating proteins, also in an autonomous, DnaK-independent fashion. Unfolded proteins bind initially to DnaJ; upon interaction with the DnaJ-bound protein, DnaK hydrolyzes its bound ATP, resulting in the formation of a stable complex. GrpE releases ADP from DnaK; ATP binding to DnaK triggers the release of the substrate protein, thus completing the reaction cycle. Several rounds of ATP-dependent interactions between DnaJ, DnaK and GrpE are required for fully efficient folding. Also involved, together with DnaK and GrpE, in the DNA replication of plasmids through activation of initiation proteins. This is Chaperone protein DnaJ from Bacillus cereus (strain ATCC 14579 / DSM 31 / CCUG 7414 / JCM 2152 / NBRC 15305 / NCIMB 9373 / NCTC 2599 / NRRL B-3711).